Here is a 199-residue protein sequence, read N- to C-terminus: MAFKLPNLPYAYDALEPYIDQRTMEFHHDKHHNTYVTKLNATVEGTELEHQSLADMIANLDKVPEAMRMSVRNNGGGHFNHSLFWEILSPNSEEKGGVIDDIKAQWGTLDEFKNEFANKATTLFGSGWTWLVVNNGKLEIVTTPNQDNPLTEGKTPILLFDVWEHAYYLKYQNKRPDYMTAFWNIVNWKKVDELYQAAK.

The Fe(3+) site is built by His-27, His-81, Asp-161, and His-165. Mn(2+) contacts are provided by His-27, His-81, Asp-161, and His-165.

Belongs to the iron/manganese superoxide dismutase family. In terms of assembly, homodimer. Can also form a heterodimer with SodA. Mn(2+) serves as cofactor. Requires Fe(3+) as cofactor.

The enzyme catalyses 2 superoxide + 2 H(+) = H2O2 + O2. Its function is as follows. Destroys superoxide anion radicals which are normally produced within the cells and which are toxic to biological systems. Catalyzes the dismutation of superoxide anion radicals into O2 and H2O2 by successive reduction and oxidation of the transition metal ion at the active site. The protein is Superoxide dismutase [Mn/Fe] 2 (sodM) of Staphylococcus aureus (strain bovine RF122 / ET3-1).